Consider the following 441-residue polypeptide: Chromosomal replication initiator protein DnaA (441 aa).

Residues 1–80 form a domain I, interacts with DnaA modulators region; it reads MQNDVLARWE…MHQEISLQFI (80 aa). The tract at residues 80–102 is domain II; sequence ILAGQEVDQPKPKERSSEETYIN. The interval 103 to 320 is domain III, AAA+ region; that stretch reads ILNPRYTFDT…GALIRVSAFS (218 aa). Residues G147, G149, K150, and T151 each coordinate ATP. The domain IV, binds dsDNA stretch occupies residues 321 to 441; the sequence is SLEQRDATPQ…IKELKKRIGE (121 aa).

Belongs to the DnaA family. In terms of assembly, oligomerizes as a right-handed, spiral filament on DNA at oriC.

The protein localises to the cytoplasm. Functionally, plays an essential role in the initiation and regulation of chromosomal replication. ATP-DnaA binds to the origin of replication (oriC) to initiate formation of the DNA replication initiation complex once per cell cycle. Binds the DnaA box (a 9 base pair repeat at the origin) and separates the double-stranded (ds)DNA. Forms a right-handed helical filament on oriC DNA; dsDNA binds to the exterior of the filament while single-stranded (ss)DNA is stabiized in the filament's interior. The ATP-DnaA-oriC complex binds and stabilizes one strand of the AT-rich DNA unwinding element (DUE), permitting loading of DNA polymerase. After initiation quickly degrades to an ADP-DnaA complex that is not apt for DNA replication. Binds acidic phospholipids. The protein is Chromosomal replication initiator protein DnaA of Desulforamulus reducens (strain ATCC BAA-1160 / DSM 100696 / MI-1) (Desulfotomaculum reducens).